A 610-amino-acid polypeptide reads, in one-letter code: Phosphoprotein 85 (610 aa).

Disordered stretches follow at residues 462–530 and 543–610; these read NEGR…NISD and EEPM…DARL. Residues 467–478 show a composition bias toward low complexity; it reads SSRASPSHSTST. Polar residues predominate over residues 484 to 495; the sequence is PQSDRSTPTSIL. Low complexity-rich tracts occupy residues 503-515 and 552-567; these read SNSR…FSQE and SPQS…RQSR. Residues 581–592 show a composition bias toward polar residues; sequence VPSSQTRRQNNA. Positions 600–610 are enriched in basic and acidic residues; the sequence is RLTEMMNDARL.

It belongs to the herpesviridae pp85 family. Post-translationally, phosphorylated.

It is found in the virion tegument. The protein localises to the host cytoplasm. The polypeptide is Phosphoprotein 85 (U14) (Homo sapiens (Human)).